A 592-amino-acid chain; its full sequence is Arginine--tRNA ligase (592 aa).

The 'HIGH' region signature appears at 139 to 149 (ANPNGPLHIGH).

Belongs to the class-I aminoacyl-tRNA synthetase family.

Its subcellular location is the cytoplasm. It carries out the reaction tRNA(Arg) + L-arginine + ATP = L-arginyl-tRNA(Arg) + AMP + diphosphate. This is Arginine--tRNA ligase from Methanopyrus kandleri (strain AV19 / DSM 6324 / JCM 9639 / NBRC 100938).